We begin with the raw amino-acid sequence, 217 residues long: Ras-related protein RABA2c (217 aa).

Residues 19-27 (GDSGVGKSN), 38-44 (CLESKST), 67-71 (DTAGQ), 125-128 (NKSD), and 155-157 (SAL) each bind GTP. The Effector region signature appears at 41 to 49 (SKSTIGVEF). The interval 195 to 217 (PGQGTTINVDDTSGGAKRACCSS) is disordered. S-geranylgeranyl cysteine attachment occurs at residues cysteine 214 and cysteine 215.

Belongs to the small GTPase superfamily. Rab family. In terms of tissue distribution, expressed in root tips.

It is found in the endosome membrane. It localises to the golgi apparatus. The protein localises to the trans-Golgi network membrane. Its function is as follows. Intracellular vesicle trafficking and protein transport. This is Ras-related protein RABA2c (RABA2C) from Arabidopsis thaliana (Mouse-ear cress).